Consider the following 1239-residue polypeptide: Potassium channel subfamily T member 1 (1239 aa).

The interval Met-1 to Val-45 is disordered. The Cytoplasmic segment spans residues Met-1–Ser-93. Residues Leu-94–Cys-126 traverse the membrane as a helical segment. Over Trp-127–Arg-153 the chain is Extracellular. 2 N-linked (GlcNAc...) asparagine glycosylation sites follow: Asn-133 and Asn-137. The chain crosses the membrane as a helical span at residues Lys-154 to Leu-178. At Ser-179–Ser-192 the chain is on the cytoplasmic side. The helical transmembrane segment at Phe-193–Phe-208 threads the bilayer. Residues Trp-209–Leu-215 lie on the Extracellular side of the membrane. The helical transmembrane segment at Phe-216–Met-233 threads the bilayer. The Cytoplasmic portion of the chain corresponds to Ile-234–Ser-246. Residues Ala-247–Glu-274 form a helical membrane-spanning segment. At Arg-275–Asn-281 the chain is on the extracellular side. The segment at residues Leu-282–Thr-302 is an intramembrane region (pore-forming). The K(+) site is built by Val-296 and Gly-297. At Pro-303 to Lys-304 the chain is on the extracellular side. The chain crosses the membrane as a helical span at residues Ile-305 to Gln-338. Over Lys-339 to Leu-1239 the chain is Cytoplasmic. The region spanning Glu-352–Val-488 is the RCK N-terminal 1 domain. Positions 513, 516, 538, and 540 each coordinate Na(+). The tract at residues Gln-658–Pro-689 is disordered. The Zn(2+) site is built by Cys-758 and Cys-759. Positions 761 and 764 each coordinate K(+). Na(+) contacts are provided by Arg-761 and Lys-764. Residues Cys-766 and His-768 each contribute to the Zn(2+) site. K(+)-binding residues include Asn-769, Tyr-771, Tyr-777, and Gly-778. Residue Tyr-771 participates in Na(+) binding. Phe-779 contributes to the Na(+) binding site. The RCK N-terminal 2 domain maps to Asn-781 to Leu-921. 5 residues coordinate K(+): Ser-787, Leu-818, Asp-820, Gly-842, and Asp-865. Disordered regions lie at residues Arg-1053–Val-1081 and Thr-1212–Leu-1239. Over residues Ser-1213 to Asn-1230 the composition is skewed to low complexity.

It belongs to the potassium channel family. Calcium-activated (TC 1.A.1.3) subfamily. KCa4.1/KCNT1 sub-subfamily. In terms of assembly, homotetramer; which constitutes the Na(+)-activated K(+) channel. Interacts with KCNT2; these heterodimer channels differ from the homomers in their unitary conductance, kinetic behavior, subcellular localization, and response to activation of protein kinase C. Interacts (via C-terminus) with FMR1; this interaction alters gating properties of KCNT1. Interacts with CRBN via its cytoplasmic C-terminus. Does not interact with KCNT2. Post-translationally, phosphorylated by protein kinase C. Phosphorylation of the C-terminal domain increases channel activity. As to expression, detected in brain and brainstem, in vestibular and oculomotor nuclei, the medial nucleus of the trapezoid in the auditory system, in olfactory bulb, red nucleus, and deep cerebellar nuclei. Detected in thalamus, substantia nigra, and amygdala (at protein level). Highly expressed in the brain and kidney.

It is found in the cell membrane. It catalyses the reaction K(+)(in) = K(+)(out). Activated by high intracellular Na(+) level. In addition to activation by Na(+), is cooperatively activated by intracellular Cl(-) levels. Activated upon stimulation of G-protein coupled receptors, such as CHRM1 and GRIA1. Functionally, sodium-activated K(+) channel. Acts as an important mediator of neuronal membrane excitability. Contributes to the delayed outward currents. Regulates neuronal bursting in sensory neurons. Contributes to synaptic development and plasticity. The sequence is that of Potassium channel subfamily T member 1 (Kcnt1) from Rattus norvegicus (Rat).